We begin with the raw amino-acid sequence, 394 residues long: Glutamyl-tRNA reductase (394 aa).

Substrate-binding positions include 45–48, Ser99, 104–106, and Gln110; these read TCNR and EEQ. The Nucleophile role is filled by Cys46. 175–180 is an NADP(+) binding site; sequence GLGNIG.

This sequence belongs to the glutamyl-tRNA reductase family. In terms of assembly, homodimer.

The catalysed reaction is (S)-4-amino-5-oxopentanoate + tRNA(Glu) + NADP(+) = L-glutamyl-tRNA(Glu) + NADPH + H(+). It participates in porphyrin-containing compound metabolism; protoporphyrin-IX biosynthesis; 5-aminolevulinate from L-glutamyl-tRNA(Glu): step 1/2. Catalyzes the NADPH-dependent reduction of glutamyl-tRNA(Glu) to glutamate 1-semialdehyde (GSA). This Caldicellulosiruptor saccharolyticus (strain ATCC 43494 / DSM 8903 / Tp8T 6331) protein is Glutamyl-tRNA reductase.